Consider the following 106-residue polypeptide: NADH dehydrogenase [ubiquinone] 1 beta subcomplex subunit 9 (106 aa).

Belongs to the complex I LYR family. Complex I is composed of about 45 different subunits.

It is found in the mitochondrion inner membrane. Functionally, accessory subunit of the mitochondrial membrane respiratory chain NADH dehydrogenase (Complex I), that is believed to be not involved in catalysis. Complex I functions in the transfer of electrons from NADH to the respiratory chain. The immediate electron acceptor for the enzyme is believed to be ubiquinone. In Dictyostelium discoideum (Social amoeba), this protein is NADH dehydrogenase [ubiquinone] 1 beta subcomplex subunit 9 (ndufb9).